A 197-amino-acid polypeptide reads, in one-letter code: Probable GTP-binding protein EngB (197 aa).

Positions 22-197 (TGVEVAFAGR…FKEKLDTWYQ (176 aa)) constitute an EngB-type G domain. Residues 30-37 (GRSNAGKS), 57-61 (GRTQL), 75-78 (DLPG), 142-145 (TKAD), and 177-179 (FSS) contribute to the GTP site. Mg(2+)-binding residues include Ser-37 and Thr-59.

Belongs to the TRAFAC class TrmE-Era-EngA-EngB-Septin-like GTPase superfamily. EngB GTPase family. Mg(2+) is required as a cofactor.

Necessary for normal cell division and for the maintenance of normal septation. This Francisella tularensis subsp. holarctica (strain FTNF002-00 / FTA) protein is Probable GTP-binding protein EngB.